A 665-amino-acid chain; its full sequence is Prelamin-A/C (665 aa).

Met-1 carries the post-translational modification N-acetylmethionine. The tract at residues Met-1–Arg-25 is disordered. Residues Met-1 to Glu-33 are head. The interval Met-1 to Ala-130 is interaction with MLIP. Thr-3 is subject to Phosphothreonine. The residue at position 5 (Ser-5) is a Phosphoserine. Phosphothreonine is present on Thr-10. A phosphoserine mark is found at Ser-12 and Ser-18. Phosphothreonine is present on Thr-19. A Phosphoserine modification is found at Ser-22. One can recognise an IF rod domain in the interval Glu-31 to Leu-387. At Lys-32 the chain carries N6-acetyllysine; alternate. Lys-32 carries the N6-succinyllysine; alternate modification. Residue Lys-32 forms a Glycyl lysine isopeptide (Lys-Gly) (interchain with G-Cter in SUMO2); alternate linkage. A coil 1A region spans residues Asp-34–Val-70. 3 positions are modified to phosphoserine: Ser-51, Ser-66, and Ser-71. Positions Ser-71 to Ala-80 are linker 1. An N6-acetyllysine mark is found at Lys-78 and Lys-97. The interval Tyr-81–Thr-218 is coil 1B. Lys-97 participates in a covalent cross-link: Glycyl lysine isopeptide (Lys-Gly) (interchain with G-Cter in SUMO2). Ser-107 is modified (phosphoserine). An N6-acetyllysine mark is found at Lys-108, Lys-114, Lys-123, Lys-135, Lys-144, and Lys-155. Lys-171 carries the post-translational modification N6-acetyllysine; alternate. Lys-171 is subject to N6-succinyllysine; alternate. Residue Lys-171 forms a Glycyl lysine isopeptide (Lys-Gly) (interchain with G-Cter in SUMO2); alternate linkage. Lys-180, Lys-201, and Lys-208 each carry N6-acetyllysine. Lys-201 is covalently cross-linked (Glycyl lysine isopeptide (Lys-Gly) (interchain with G-Cter in SUMO2); alternate). Residue Lys-201 forms a Glycyl lysine isopeptide (Lys-Gly) (interchain with G-Cter in SUMO); alternate linkage. Lys-208 is covalently cross-linked (Glycyl lysine isopeptide (Lys-Gly) (interchain with G-Cter in SUMO2)). Phosphoserine is present on Ser-212. Glycyl lysine isopeptide (Lys-Gly) (interchain with G-Cter in SUMO2) cross-links involve residues Lys-219 and Lys-233. Residues Lys-219–Ala-242 form a linker 2 region. An N6-acetyllysine mark is found at Lys-233, Lys-260, Lys-265, and Lys-270. Positions Asp-243–Glu-383 are coil 2. Residue Lys-260 forms a Glycyl lysine isopeptide (Lys-Gly) (interchain with G-Cter in SUMO2); alternate linkage. Residue Lys-270 forms a Glycyl lysine isopeptide (Lys-Gly) (interchain with G-Cter in SUMO2); alternate linkage. Residues Ser-277, Ser-282, Ser-301, and Ser-307 each carry the phosphoserine modification. Lys-311 is covalently cross-linked (Glycyl lysine isopeptide (Lys-Gly) (interchain with G-Cter in SUMO2); alternate). Lys-311, Lys-316, and Lys-341 each carry N6-acetyllysine. Residues Lys-366 and Lys-378 each participate in a glycyl lysine isopeptide (Lys-Gly) (interchain with G-Cter in SUMO2) cross-link. A disordered region spans residues Glu-384–Val-442. Residues Glu-384–Met-665 form a tail region. Residues Ser-390, Ser-392, Ser-395, Ser-398, Ser-403, Ser-404, Ser-406, Ser-407, Ser-409, and Ser-414 each carry the phosphoserine modification. Residue Ser-392 is modified to Phosphoserine; by CDK1. The span at Ser-395–Ser-409 shows a compositional bias: low complexity. Thr-416 is subject to Phosphothreonine. Lys-417 and Lys-420 each carry N6-acetyllysine. Residues Lys-417 and Lys-420 each participate in a glycyl lysine isopeptide (Lys-Gly) (interchain with G-Cter in SUMO2) cross-link. Positions Lys-417–Glu-422 match the Nuclear localization signal motif. Phosphoserine occurs at positions 423, 426, 429, and 431. The LTD domain occupies Ser-428–Arg-545. A Glycyl lysine isopeptide (Lys-Gly) (interchain with G-Cter in SUMO2); alternate cross-link involves residue Lys-450. An N6-acetyllysine mark is found at Lys-450 and Lys-457. Phosphoserine occurs at positions 458, 460, and 463. An N6-acetyllysine modification is found at Lys-486. Lys-486 is covalently cross-linked (Glycyl lysine isopeptide (Lys-Gly) (interchain with G-Cter in SUMO2)). Residue Thr-496 is modified to Phosphothreonine. Residue Ser-500 is modified to Phosphoserine. 2 positions are modified to phosphothreonine: Thr-505 and Thr-510. A phosphoserine mark is found at Ser-533 and Ser-546. Thr-548 carries the post-translational modification Phosphothreonine. The disordered stretch occupies residues Asn-553 to Asp-577. Phosphoserine is present on residues Ser-570, Cys-572, and Ser-573. Lys-599 is covalently cross-linked (Glycyl lysine isopeptide (Lys-Gly) (interchain with G-Cter in SUMO2); alternate). Lys-599 participates in a covalent cross-link: Glycyl lysine isopeptide (Lys-Gly) (interchain with G-Cter in SUMO1); alternate. Ser-613, Ser-614, Ser-617, and Ser-620 each carry phosphoserine. Residues Ser-626 and Ser-629 are each glycosylated (O-linked (GlcNAc) serine). A phosphoserine mark is found at Ser-629, Ser-633, Ser-637, and Ser-653. A propeptide spans Leu-648–Cys-662 (removed in Lamin-A/C form). Cys-662 bears the Cysteine methyl ester mark. The S-farnesyl cysteine moiety is linked to residue Cys-662. A propeptide spans Ser-663–Met-665 (removed in Prelamin-A/C form and in Lamin-A/C form).

The protein belongs to the intermediate filament family. Homodimer of lamin A and lamin C. Lamin dimers then assemble into dimeric head-to-tail polymers. Ultimately, two head-to-tail polymers assemble laterally into a protofilament with a uniformly shaped rod of 3.5 nm in diameter. Interacts with lamin-associated polypeptides IA, IB and TMPO-alpha, RB1 and with emerin. Proteolytically processed isoform A interacts with NARF. Interacts with SREBF1, SREBF2, SUN1, SUN2 and TMEM43. Interacts with TMEM201. Prelamin-A/C interacts with EMD. Interacts with DMPK; may regulate nuclear envelope stability. Interacts with MLIP. Interacts with SUV39H1; the interaction increases stability of SUV39H1. Interacts with ITSN1 isoform 2. Interacts with IFFO1; the interaction forms an interior nucleoskeleton and the recruitment to DNA double-strand breaks. As to quaternary structure, interacts with EMD. In terms of assembly, interacts (via C-terminus) with LEMD2 (via N-terminus) (in vitro). Proteolytic cleavage of the C-terminal of 18 residues of prelamin-A/C results in the production of lamin-A/C. The prelamin-A/C maturation pathway includes farnesylation of CAAX motif by protein farnesyltransferase (FNTA and FNTB), removal of the last three amino acids (-AAX) by RCE1/FACE2 and/or ZMPSTE24, methylation of the C-terminal cysteine by ICMT and endoproteolytic removal of the last 15 C-terminal amino acids by ZMPSTE24. Proteolytic cleavage requires prior farnesylation and methylation, and absence of these blocks cleavage. In terms of processing, farnesylation of prelamin-A/C facilitates nuclear envelope targeting. Post-translationally, phosphorylation plays a key role in lamin organization, subcellular localization and nuclear envelope disintegration. Phosphorylation by CDK1 at Ser-22 and Ser-392 at the onset of mitosis drives lamin disassembly and nuclear envelope breakdown. Phosphorylation at Ser-22 and Ser-392 during interphase promotes localization to the nucleoplasm and regulates lamina assembly. Phosphorylation at Ser-22, Ser-392 and Ser-629 during interphase causes redistribution between the nucleus and the cytoplasm. Phosphorylation at Ser-22 by CDK1 regulates matrix stiffness. Phosphorylation status of Ser-22 determines its localization between double-strand break (DSB) sites and the nuclear matrix. Phosphorylated by ATR at Ser-282 in response to DNA damage, leading to lamin disassembly and nuclear envelope rupture. Phosphorylation also regulates stability in micronuclei arising from genome instability: phosphorylation at Ser-395 by ATR in response to genome instability and double-stranded DNA breaks primes LMNA for subsequent phosphorylation at Ser-392 by CDK1 and micronuclei envelope rupture. The rupture of micronuclear envelope triggers the cGAS-STING pathway thereby activating the type I interferon response and innate immunity. Isoform C is phosphorylated on Ser-392, Ser-407 and Ser-409 at interphase. In terms of processing, acetylation by KAT8 is required for nuclear architecture. Post-translationally, sumoylation is necessary for the localization to the nuclear envelope. The N-terminus is blocked. In terms of tissue distribution, expressed in liver and in bone marrow (at protein level). Expressed in cardiomyocytes. Specifically expressed in germ cells.

The protein resides in the nucleus lamina. Its subcellular location is the nucleus envelope. It is found in the nucleus. The protein localises to the nucleoplasm. It localises to the nucleus matrix. Its function is as follows. Lamins are intermediate filament proteins that assemble into a filamentous meshwork, and which constitute the major components of the nuclear lamina, a fibrous layer on the nucleoplasmic side of the inner nuclear membrane. Lamins provide a framework for the nuclear envelope, bridging the nuclear envelope and chromatin, thereby playing an important role in nuclear assembly, chromatin organization, nuclear membrane and telomere dynamics. Lamin A and C also regulate matrix stiffness by conferring nuclear mechanical properties. The structural integrity of the lamina is strictly controlled by the cell cycle, as seen by the disintegration and formation of the nuclear envelope in prophase and telophase, respectively. Lamin A and C are present in equal amounts in the lamina of mammals. Also invoved in DNA repair: recruited by DNA repair proteins XRCC4 and IFFO1 to the DNA double-strand breaks (DSBs) to prevent chromosome translocation by immobilizing broken DNA ends. Required for normal development of peripheral nervous system and skeletal muscle and for muscle satellite cell proliferation. Required for osteoblastogenesis and bone formation. Also prevents fat infiltration of muscle and bone marrow, helping to maintain the volume and strength of skeletal muscle and bone. Required for cardiac homeostasis. Prelamin-A/C can accelerate smooth muscle cell senescence. It acts to disrupt mitosis and induce DNA damage in vascular smooth muscle cells (VSMCs), leading to mitotic failure, genomic instability, and premature senescence. Functionally, isoform C2 may have a role in determining the organization of nuclear and chromosomal structures during spermatogenesis. This is Prelamin-A/C (Lmna) from Mus musculus (Mouse).